The following is a 645-amino-acid chain: Aspartate--tRNA ligase, mitochondrial (645 aa).

A mitochondrion-targeting transit peptide spans 1–47 (MYFPSWLSQLYRGLSRPIRRTTQPIWGSLYRSLLQSSQRRIPEFSSF). Position 219 is a phosphothreonine (threonine 219). Phosphoserine is present on serine 242. An aspartate region spans residues 244–247 (QQFK). An L-aspartate-binding site is contributed by arginine 266. Position 266-268 (266-268 (RDE)) interacts with ATP. The residue at position 382 (lysine 382) is an N6-acetyllysine. ATP is bound at residue glutamate 535. Arginine 542 contributes to the L-aspartate binding site. 584-587 (GLDR) contributes to the ATP binding site.

The protein belongs to the class-II aminoacyl-tRNA synthetase family. Type 1 subfamily. In terms of assembly, homodimer.

It localises to the mitochondrion matrix. Its subcellular location is the mitochondrion membrane. The enzyme catalyses tRNA(Asp) + L-aspartate + ATP = L-aspartyl-tRNA(Asp) + AMP + diphosphate. In terms of biological role, catalyzes the attachment of aspartate to tRNA(Asp) in a two-step reaction: aspartate is first activated by ATP to form Asp-AMP and then transferred to the acceptor end of tRNA(Asp). The chain is Aspartate--tRNA ligase, mitochondrial (DARS2) from Homo sapiens (Human).